A 271-amino-acid chain; its full sequence is Phycocyanobilin lyase subunit alpha (271 aa).

This sequence belongs to the CpcE/RpcE/PecE family. In terms of assembly, cpcE and CpcF associate to form a lyase.

Required for the chromophorylation of the cpcA1 gene product. This Pseudanabaena tenuis (strain PCC 7409) protein is Phycocyanobilin lyase subunit alpha (cpcE1).